We begin with the raw amino-acid sequence, 3011 residues long: Genome polyprotein (3011 aa).

S2 is modified (N-acetylserine; by host). Residues S2–K23 are interaction with STAT1. Residues S2–P58 are interaction with EIF2AK2/PKR. Residues S2–R59 form an interaction with DDX3X region. Positions S2–S75 are disordered. Residues S2–N168 lie on the Cytoplasmic side of the membrane. 2 consecutive short sequence motifs (nuclear localization signal) follow at residues P5–R13 and P38–R43. The segment covering P7–N16 has biased composition (basic residues). The residue at position 53 (S53) is a Phosphoserine; by host. 2 consecutive short sequence motifs (nuclear localization signal) follow at residues P58–P64 and P66–P71. Residues P58 to A68 show a composition bias toward basic residues. Phosphoserine; by host is present on S99. The segment at P112–A152 is important for endoplasmic reticulum and mitochondrial localization. The residue at position 116 (S116) is a Phosphoserine; by host PKA. Residues V122 to S173 are interaction with APOA2. Residues Y164–G167 are important for lipid droplets localization. A helical membrane pass occupies residues L169–A189. A propeptide spans L178–A191 (ER anchor for the core protein, removed in mature form by host signal peptidase). At S190 to G358 the chain is on the lumenal side. 3 N-linked (GlcNAc...) asparagine; by host glycosylation sites follow: N196, N209, and N234. The tract at residues I265 to R296 is important for fusion. N-linked (GlcNAc...) asparagine; by host glycosylation occurs at N305. The helical transmembrane segment at L359–A379 threads the bilayer. Residues G380 to L725 are Lumenal-facing. The interval T385–I411 is HVR1. 4 N-linked (GlcNAc...) (high mannose) asparagine; by host glycosylation sites follow: N417, N423, N430, and N448. 4 disulfide bridges follow: C429/C552, C452/C459, C486/C494, and C503/C508. The tract at residues H474 to S479 is HVR2. The CD81-binding 1 stretch occupies residues D480–P493. Residue N532 is glycosylated (N-linked (GlcNAc...) (high mannose) asparagine; by host). N-linked (GlcNAc...) asparagine; by host glycosylation occurs at N540. The tract at residues P544–G551 is CD81-binding 2. N556 carries N-linked (GlcNAc...) (high mannose) asparagine; by host glycosylation. The cysteines at positions 564 and 569 are disulfide-linked. N-linked (GlcNAc...) (high mannose) asparagine; by host glycosylation is present at N576. Cystine bridges form between C581–C585, C597–C620, and C607–C644. Residues N623 and N645 are each glycosylated (N-linked (GlcNAc...) (high mannose) asparagine; by host). Cysteines 652 and 677 form a disulfide. The segment at A660–Q671 is PKR/eIF2-alpha phosphorylation homology domain (PePHD). A helical membrane pass occupies residues L726–A746. Topologically, residues A747 to A757 are lumenal. The chain crosses the membrane as a helical span at residues S758–L778. Residues K779–K781 are Cytoplasmic-facing. The helical transmembrane segment at W782 to L803 threads the bilayer. Residues P804–E813 lie on the Lumenal side of the membrane. The helical transmembrane segment at L814–Y834 threads the bilayer. Residues Y835–Y838 are Cytoplasmic-facing. Residues M839–V859 form a helical membrane-spanning segment. The Lumenal portion of the chain corresponds to W860–H881. Residues P882 to L902 form a helical membrane-spanning segment. The Peptidase C18 domain maps to Q903 to L1026. Residues Q903–T1657 lie on the Cytoplasmic side of the membrane. Residues A904 to R1206 are protease NS2-3. C922 carries S-palmitoyl cysteine; by host lipidation. Residues A929–I949 are interaction with host SCPS1. Residues H952, E972, and C993 each act as for protease NS2 activity; shared with dimeric partner in the active site. The Peptidase S29 domain maps to A1027–P1208. Residues H1083 and D1107 each act as charge relay system; for serine protease NS3 activity in the active site. Zn(2+) contacts are provided by C1123 and C1125. S1165 serves as the catalytic Charge relay system; for serine protease NS3 activity. Residues C1171 and H1175 each coordinate Zn(2+). A Helicase ATP-binding domain is found at P1217 to T1369. ATP is bound at residue A1230–S1237. Mg(2+) is bound by residues S1237 and E1317. The DECH box signature appears at D1316–H1319. The interval Q1486–G1497 is RNA-binding. A helical transmembrane segment spans residues S1658–G1678. An NS3-binding region spans residues S1679 to G1690. The Cytoplasmic portion of the chain corresponds to S1679–Q1805. Residues T1806–A1824 traverse the membrane as a helical segment. Over A1825 to A1828 the chain is Lumenal. A helical membrane pass occupies residues F1829 to V1849. D1850 is a topological domain (cytoplasmic). A helical transmembrane segment spans residues I1851–G1871. The Lumenal portion of the chain corresponds to E1872–N1881. Residues L1882–L1902 form a helical membrane-spanning segment. The Cytoplasmic portion of the chain corresponds to R1903–C1972. S-palmitoyl cysteine; by host attachment occurs at residues C1968 and C1972. The stretch at A1973–Q2002 is an intramembrane region. At L2003–R2990 the chain is on the cytoplasmic side. Zn(2+) is bound by residues C2011, C2029, C2031, and C2052. The FKBP8-binding stretch occupies residues E2120–A2208. The transcriptional activation stretch occupies residues E2120–T2332. The interaction with non-structural protein 4A stretch occupies residues P2135–P2139. The segment at R2189–L2441 is interaction with host SKP2. At S2194 the chain carries Phosphoserine; by host; in p56. 5 positions are modified to phosphoserine; by host; in p58: S2197, S2201, S2204, S2207, and S2210. The interval S2210–K2249 is ISDR. The interaction with EIF2AK2/PKR stretch occupies residues S2210–L2275. The segment at K2249 to Y2306 is NS4B-binding. The short motif at T2322–P2325 is the SH3-binding element. The Nuclear localization signal signature appears at P2326–V2334. A Glycyl lysine isopeptide (Lys-Gly) (interchain with G-Cter in ubiquitin) cross-link involves residue K2350. Positions F2352–S2373 are enriched in low complexity. Positions F2352–S2409 are disordered. The tract at residues S2354 to E2377 is V3. 2 positions are modified to phosphoserine; by host: S2449 and S2462. In terms of domain architecture, RdRp catalytic spans P2634 to D2752. Mg(2+) is bound by residues D2640, D2738, and D2739. Residues W2991–R3011 traverse the membrane as a helical segment.

Belongs to the hepacivirus polyprotein family. In terms of assembly, homooligomer. Interacts with E1 (via C-terminus). Interacts with the non-structural protein 5A. Interacts (via N-terminus) with host STAT1 (via SH2 domain); this interaction results in decreased STAT1 phosphorylation and ubiquitin-mediated proteasome-dependent STAT1 degradation, leading to decreased IFN-stimulated gene transcription. Interacts with host STAT3; this interaction constitutively activates STAT3. Interacts with host LTBR receptor. Interacts with host TNFRSF1A receptor and possibly induces apoptosis. Interacts with host HNRPK. Interacts with host YWHAE. Interacts with host UBE3A/E6AP. Interacts with host DDX3X. Interacts with host APOA2. Interacts with host RXRA protein. Interacts with host SP110 isoform 3/Sp110b; this interaction sequesters the transcriptional corepressor SP110 away from the nucleus. Interacts with host CREB3 nuclear transcription protein; this interaction triggers cell transformation. Interacts with host ACY3. Interacts with host C1QR1. Interacts with host RBM24; this interaction, which enhances the interaction of the mature core protein with 5'-UTR, may inhibit viral translation and favor replication. Interacts with host EIF2AK2/PKR; this interaction induces the autophosphorylation of EIF2AK2. Part of the viral assembly initiation complex composed of NS2, E1, E2, NS3, NS4A, NS5A and the mature core protein. As to quaternary structure, forms a heterodimer with envelope glycoprotein E2. Interacts with mature core protein. Interacts with protease NS2. The heterodimer E1/E2 interacts with host CLDN1; this interaction plays a role in viral entry into host cell. Interacts with host SPSB2 (via C-terminus). Part of the viral assembly initiation complex composed of NS2, E1, E2, NS3, NS4A, NS5A and the mature core protein. Interacts with host NEURL3; this interaction prevents E1 binding to glycoprotein E2. Forms a heterodimer with envelope glycoprotein E1. Interacts with host CD81 and SCARB1 receptors; these interactions play a role in viral entry into host cell. Interacts with host EIF2AK2/PKR; this interaction inhibits EIF2AK2 and probably allows the virus to evade the innate immune response. Interacts with host CD209/DC-SIGN and CLEC4M/DC-SIGNR. Interact with host SPCS1; this interaction is essential for viral particle assembly. Interacts with protease NS2. The heterodimer E1/E2 interacts with host CLDN1; this interaction plays a role in viral entry into host cell. Part of the viral assembly initiation complex composed of NS2, E1, E2, NS3, NS4A, NS5A and the mature core protein. Interacts with host SLC3A2/4F2hc; the interaction may facilitate viral entry into host cell. Interacts with human PLSCR1. In terms of assembly, homohexamer. Homoheptamer. Interacts with protease NS2. As to quaternary structure, homodimer. Interacts with host SPCS1; this interaction is essential for viral particle assembly. Interacts with envelope glycoprotein E1. Interacts with envelope glycoprotein E2. Interacts with viroporin p7. Interacts with serine protease/helicase NS3. Part of the replication complex composed of NS2, NS3, NS4A, NS4B, NS5A and the RNA-directed RNA polymerase embedded in an ER-derived membranous web. Part of the viral assembly initiation complex composed of NS2, E1, E2, NS3, NS4A, NS5A and the mature core protein. Interacts with protease NS2. Interacts with non-structural protein 4A; this interaction stabilizes the folding of NS3 serine protease. NS3-NS4A interaction is essential for NS3 activation and allows membrane anchorage of the latter. NS3/NS4A complex also prevents phosphorylation of host IRF3, thus preventing the establishment of dsRNA induced antiviral state. Interacts with host MAVS; this interaction leads to the cleavage and inhibition of host MAVS. Interacts with host TICAM1; this interaction leads to the cleavage and inhibition of host TICAM1. Interacts with host TANK-binding kinase/TBK1; this interaction results in the inhibition of the association between TBK1 and IRF3, which leads to the inhibition of IRF3 activation. Interacts with host RBM24. Part of the replication complex composed of NS2, NS3, NS4A, NS4B, NS5A and the RNA-directed RNA polymerase embedded in an ER-derived membranous web. Part of the viral assembly initiation complex composed of NS2, E1, E2, NS3, NS4A, NS5A and the mature core protein. In terms of assembly, interacts with NS3 serine protease; this interaction stabilizes the folding of NS3 serine protease. NS3-NS4A interaction is essential for NS3 activation and allows membrane anchorage of the latter. Interacts with non-structural protein 5A (via N-terminus). Part of the replication complex composed of NS2, NS3, NS4A, NS4B, NS5A and the RNA-directed RNA polymerase embedded in an ER-derived membranous web. Part of the viral assembly initiation complex composed of NS2, E1, E2, NS3, NS4A, NS5A and the mature core protein. As to quaternary structure, homomultimer. Interacts with non-structural protein NS5A. Interacts with host PLA2G4C; this interaction likely initiates the recruitment of replication complexes to lipid droplets. Interacts with host STING; this interaction disrupts the interaction between STING and TBK1 thereby suppressing the interferon signaling. Part of the replication complex composed of NS2, NS3, NS4A, NS4B, NS5A and the RNA-directed RNA polymerase embedded in an ER-derived membranous web. Monomer. Homodimer; dimerization is required for RNA-binding. Interacts with the mature core protein. Interacts (via N-terminus) with non-structural protein 4A. Interacts with non-structural protein 4B. Interacts (via region D2) with RNA-directed RNA polymerase. Part of the viral assembly initiation complex composed of NS2, E1, E2, NS3, NS4A, NS5A and the mature core protein. Part of the replication complex composed of NS2, NS3, NS4A, NS4B, NS5A and the RNA-directed RNA polymerase embedded in an ER-derived membranous web. Interacts with host GRB2. Interacts with host BIN1. Interacts with host PIK3R1. Interacts with host SRCAP. Interacts with host FKBP8. Interacts (via C-terminus) with host VAPB (via MSP domain). Interacts with host EIF2AK2/PKR; this interaction leads to disruption of EIF2AK2 dimerization by NS5A and probably allows the virus to evade the innate immune response. Interacts (via N-terminus) with host PACSIN2 (via N-terminus); this interaction attenuates protein kinase C alpha-mediated phosphorylation of PACSIN2 by disrupting the interaction between PACSIN2 and PRKCA. Interacts (via N-terminus) with host SRC kinase (via SH2 domain). Interacts with most Src-family kinases. Interacts with host IFI27 and SKP2; promotes the ubiquitin-mediated proteasomal degradation of NS5A. Interacts with host GPS2. Interacts with host TNFRSF21; this interaction allows the modulation by the virus of JNK, p38 MAPK, STAT3, and Akt signaling pathways in a DR6-dependent manner. Interacts (via N-terminus) with host CIDEB (via N-terminus); this interaction seems to regulate the association of HCV particles with APOE. Interacts with host CHKA/Choline Kinase-alpha; CHKA bridges host PI4KA and NS5A and potentiates NS5A-stimulated PI4KA activity, which then facilitates the targeting of the ternary complex to the ER for viral replication. Interacts with host SPSB2 (via C-terminus); this interaction targets NS5A for ubiquitination and degradation. Interacts with host RAB18; this interaction may promote the association of NS5A and other replicase components with lipid droplets. Interacts (via region D2) with host PPIA/CYPA; the interaction stimulates RNA-binding ability of NS5A and is dependent on the peptidyl-prolyl cis-trans isomerase activity of PPIA/CYPA. Interacts with host TRIM14; this interaction induces the degradation of NS5A. In terms of assembly, homooligomer. Interacts with non-structural protein 5A. Interacts with host VAPB. Interacts with host PRK2/PKN2. Interacts with host HNRNPA1 and SEPT6; these interactions facilitate viral replication. Part of the replication complex composed of NS2, NS3, NS4A, NS4B, NS5A and the RNA-directed RNA polymerase. Zn(2+) is required as a cofactor. Requires Mg(2+) as cofactor. Specific enzymatic cleavages in vivo yield mature proteins. The structural proteins, core, E1, E2 and p7 are produced by proteolytic processing by host signal peptidases. The core protein precursor is synthesized as a 23 kDa, which is retained in the ER membrane through the hydrophobic signal peptide. Cleavage by the signal peptidase releases the 21 kDa mature core protein. The cleavage of the core protein precursor occurs between aminoacids 176 and 188 but the exact cleavage site is not known. Some degraded forms of the core protein appear as well during the course of infection. The other proteins (p7, NS2, NS3, NS4A, NS4B, NS5A and NS5B) are cleaved by the viral proteases. Autoprocessing between NS2 and NS3 is mediated by the NS2 cysteine protease catalytic domain and regulated by the NS3 N-terminal domain. Post-translationally, phosphorylated by host PKC and PKA. In terms of processing, ubiquitinated; mediated by UBE3A and leading to core protein subsequent proteasomal degradation. Highly N-glycosylated. Post-translationally, palmitoylation is required for NS2/3 autoprocessing and E2 recruitment to membranes. In terms of processing, palmitoylated. This modification may play a role in its polymerization or in protein-protein interactions. Phosphorylated on serines in a basal form termed p56. p58 is a hyperphosphorylated form of p56. p56 and p58 coexist in the cell in roughly equivalent amounts. Hyperphosphorylation is dependent on the presence of NS4A. Host CSNK1A1/CKI-alpha or RPS6KB1 kinases may be responsible for NS5A phosphorylation. Post-translationally, tyrosine phosphorylation is essential for the interaction with host SRC. In terms of processing, the N-terminus is phosphorylated by host PRK2/PKN2.

The protein resides in the host endoplasmic reticulum membrane. It localises to the host mitochondrion membrane. Its subcellular location is the virion. It is found in the host cytoplasm. The protein localises to the host nucleus. The protein resides in the host lipid droplet. It localises to the virion membrane. Its subcellular location is the host mitochondrion. It is found in the host cell membrane. The protein localises to the host perinuclear region. The catalysed reaction is Hydrolysis of four peptide bonds in the viral precursor polyprotein, commonly with Asp or Glu in the P6 position, Cys or Thr in P1 and Ser or Ala in P1'.. It carries out the reaction a ribonucleoside 5'-triphosphate + H2O = a ribonucleoside 5'-diphosphate + phosphate + H(+). The enzyme catalyses ATP + H2O = ADP + phosphate + H(+). It catalyses the reaction RNA(n) + a ribonucleoside 5'-triphosphate = RNA(n+1) + diphosphate. Its activity is regulated as follows. Inhibited by the antiviral drug hexamethylene amiloride. Inhibition by amantadine appears to be genotype-dependent. Also inhibited by long-alkyl-chain iminosugar derivatives. With respect to regulation, activity is up-regulated by PRK2/PKN2-mediated phosphorylation. Its function is as follows. Packages viral RNA to form a viral nucleocapsid, and promotes virion budding. Participates in the viral particle production as a result of its interaction with the non-structural protein 5A. Binds RNA and may function as a RNA chaperone to induce the RNA structural rearrangements taking place during virus replication. Modulates viral translation initiation by interacting with viral IRES and 40S ribosomal subunit. Affects various cell signaling pathways, host immunity and lipid metabolism. Prevents the establishment of cellular antiviral state by blocking the interferon-alpha/beta (IFN-alpha/beta) and IFN-gamma signaling pathways and by blocking the formation of phosphorylated STAT1 and promoting ubiquitin-mediated proteasome-dependent degradation of STAT1. Activates STAT3 leading to cellular transformation. Regulates the activity of cellular genes, including c-myc and c-fos. May repress the promoter of p53, and sequester CREB3 and SP110 isoform 3/Sp110b in the cytoplasm. Represses cell cycle negative regulating factor CDKN1A, thereby interrupting an important check point of normal cell cycle regulation. Targets transcription factors involved in the regulation of inflammatory responses and in the immune response: suppresses TNF-induced NF-kappa-B activation, and activates AP-1. Binds to dendritic cells (DCs) via C1QR1, resulting in down-regulation of T-lymphocytes proliferation. Alters lipid metabolism by interacting with hepatocellular proteins involved in lipid accumulation and storage. Induces up-regulation of FAS promoter activity, and thereby contributes to the increased triglyceride accumulation in hepatocytes (steatosis). In terms of biological role, forms a heterodimer with envelope glycoprotein E2, which mediates virus attachment to the host cell, virion internalization through clathrin-dependent endocytosis and fusion with host membrane. Fusion with the host cell is most likely mediated by both E1 and E2, through conformational rearrangements of the heterodimer required for fusion rather than a classical class II fusion mechanism. E1/E2 heterodimer binds host apolipoproteins such as APOB and ApoE thereby forming a lipo-viro-particle (LVP). APOE associated to the LVP allows the initial virus attachment to cell surface receptors such as the heparan sulfate proteoglycans (HSPGs), syndecan-1 (SDC1), syndecan-1 (SDC2), the low-density lipoprotein receptor (LDLR) and scavenger receptor class B type I (SCARB1). The cholesterol transfer activity of SCARB1 allows E2 exposure and binding of E2 to SCARB1 and the tetraspanin CD81. E1/E2 heterodimer binding on CD81 activates the epithelial growth factor receptor (EGFR) signaling pathway. Diffusion of the complex E1-E2-EGFR-SCARB1-CD81 to the cell lateral membrane allows further interaction with Claudin 1 (CLDN1) and occludin (OCLN) to finally trigger HCV entry. Functionally, forms a heterodimer with envelope glycoprotein E1, which mediates virus attachment to the host cell, virion internalization through clathrin-dependent endocytosis and fusion with host membrane. Fusion with the host cell is most likely mediated by both E1 and E2, through conformational rearrangements of the heterodimer required for fusion rather than a classical class II fusion mechanism. The interaction between envelope glycoprotein E2 and host apolipoprotein E/APOE allows the proper assembly, maturation and infectivity of the viral particles. This interaction is probably promoted via the up-regulation of cellular autophagy by the virus. E1/E2 heterodimer binds host apolipoproteins such as APOB and APOE thereby forming a lipo-viro-particle (LVP). APOE associated to the LVP allows the initial virus attachment to cell surface receptors such as the heparan sulfate proteoglycans (HSPGs), syndecan-1 (SDC1), syndecan-1 (SDC2), the low-density lipoprotein receptor (LDLR) and scavenger receptor class B type I (SCARB1). The cholesterol transfer activity of SCARB1 allows E2 exposure and binding of E2 to SCARB1 and the tetraspanin CD81. E1/E2 heterodimer binding on CD81 activates the epithelial growth factor receptor (EGFR) signaling pathway. Diffusion of the complex E1-E2-EGFR-SCARB1-CD81 to the cell lateral membrane allows further interaction with Claudin 1 (CLDN1) and occludin (OCLN) to finally trigger HCV entry. Inhibits host EIF2AK2/PKR activation, preventing the establishment of an antiviral state. Viral ligand for CD209/DC-SIGN and CLEC4M/DC-SIGNR, which are respectively found on dendritic cells (DCs), and on liver sinusoidal endothelial cells and macrophage-like cells of lymph node sinuses. These interactions allow the capture of circulating HCV particles by these cells and subsequent facilitated transmission to permissive cells such as hepatocytes and lymphocyte subpopulations. The interaction between E2 and host amino acid transporter complex formed by SLC3A2 and SLC7A5/LAT1 may facilitate viral entry into host cell. Ion channel protein that acts as a viroporin and plays an essential role in the assembly, envelopment and secretion of viral particles. Regulates the host cell secretory pathway, which induces the intracellular retention of viral glycoproteins and favors assembly of viral particles. Creates a pore in acidic organelles and releases Ca(2+) and H(+) in the cytoplasm of infected cells, leading to a productive viral infection. High levels of cytoplasmic Ca(2+) may trigger membrane trafficking and transport of viral ER-associated proteins to viroplasms, sites of viral genome replication. This ionic imbalance induces the assembly of the inflammasome complex, which triggers the maturation of pro-IL-1beta into IL-1beta through the action of caspase-1. Targets also host mitochondria and induces mitochondrial depolarization. In addition of its role as a viroporin, acts as a lipid raft adhesion factor. Its function is as follows. Cysteine protease required for the proteolytic auto-cleavage between the non-structural proteins NS2 and NS3. The N-terminus of NS3 is required for the function of NS2 protease (active region NS2-3). Promotes the initiation of viral particle assembly by mediating the interaction between structural and non-structural proteins. In terms of biological role, displays three enzymatic activities: serine protease with a chymotrypsin-like fold, NTPase and RNA helicase. NS3 serine protease, in association with NS4A, is responsible for the cleavages of NS3-NS4A, NS4A-NS4B, NS4B-NS5A and NS5A-NS5B. The NS3/NS4A complex prevents phosphorylation of host IRF3, thus preventing the establishment of dsRNA induced antiviral state. The NS3/NS4A complex induces host amino acid transporter component SLC3A2, thus contributing to HCV propagation. NS3 RNA helicase binds to RNA and unwinds both dsDNA and dsRNA in the 3' to 5' direction, and likely resolves RNA complicated stable secondary structures in the template strand. Binds a single ATP and catalyzes the unzipping of a single base pair of dsRNA. Inhibits host antiviral proteins TBK1 and IRF3 thereby preventing the establishment of an antiviral state. Cleaves host MAVS/CARDIF thereby preventing the establishment of an antiviral state. Cleaves host TICAM1/TRIF, thereby disrupting TLR3 signaling and preventing the establishment of an antiviral state. Functionally, induces a specific membrane alteration that serves as a scaffold for the virus replication complex. This membrane alteration gives rise to the so-called ER-derived membranous web that contains the replication complex. NS4B self-interaction contributes to its function in membranous web formation. Promotes host TRIF protein degradation in a CASP8-dependent manner thereby inhibiting host TLR3-mediated interferon signaling. Disrupts the interaction between STING and TBK1 contributing to the inhibition of interferon signaling. Phosphorylated protein that is indispensable for viral replication and assembly. Both hypo- and hyperphosphorylated states are required for the viral life cycle. The hyperphosphorylated form of NS5A is an inhibitor of viral replication. Involved in RNA-binding and especially in binding to the viral genome. Zinc is essential for RNA-binding. Participates in the viral particle production as a result of its interaction with the mature viral core protein. Its interaction with host VAPB may target the viral replication complex to vesicles. Down-regulates viral IRES translation initiation. Mediates interferon resistance, presumably by interacting with and inhibiting host EIF2AK2/PKR. Prevents BIN1-induced apoptosis. Acts as a transcriptional activator of some host genes important for viral replication when localized in the nucleus. Via the interaction with host PACSIN2, modulates lipid droplet formation in order to promote virion assembly. Modulates TNFRSF21/DR6 signaling pathway for viral propagation. Its function is as follows. RNA-dependent RNA polymerase that performs primer-template recognition and RNA synthesis during viral replication. Initiates RNA transcription/replication at a flavin adenine dinucleotide (FAD), resulting in a 5'- FAD cap on viral RNAs. In this way, recognition of viral 5' RNA by host pattern recognition receptors can be bypassed, thereby evading activation of antiviral pathways. This chain is Genome polyprotein, found in Homo sapiens (Human).